Reading from the N-terminus, the 623-residue chain is MTDQPAPTDHLIRAADEVKIRQRLVRVALGHVAGDTRLRVGKLLDVHSRMWLSDQEIILSGRRIAYVGPAGSYPGGVAHEVHEPDLMAVPGFGEVHKHIESSHVTPEWEAALVLPHGNTWTCEASHEFSNVNGPHNLEFWLTARLAGSPQKIFPLPGSAVPPTAYEWGGGHFGYDEQAGFLNESLMVAGLDEVMDWPAVWNPENPSYDRLWGMIEATFEKRGVIEGHAAGIRDMATINAFAAAGLASDHEAWTTEEVLDKLRRGLFMELRPHSLSEMVKGLLEAGLEDWGQFALTTDDRSCSDTLKMGATDHNVRLAISAGLSPEVAIQMVTINPARHMRLTPWVGSLAPGRFADIVLLDDLPSVSIRQVWADGELVAEDGTYLKPIPKIDWPDWATQTVKIDRAMMADDFAIPAKRGRDTMHAALLRPFHWDDDFITMDLPVKDGQVQRDPRRNVTKFAIVDRFSGEGKTSAMFWLGTGPRTSDTALACSMGHDKHNVWAVGSSDAAMAMAVNALRDIQGGWALVREGQLVATVRYEVGGLMTCRPPAELDAEMQALYAEGEKIDWMYEPTVSPRWFPGFPERLAFATLTCAPWRWVLVAPSDRAPDGFVNVATGQTHPVVW.

This sequence belongs to the metallo-dependent hydrolases superfamily. Adenine deaminase family. Requires Mn(2+) as cofactor.

It catalyses the reaction adenine + H2O + H(+) = hypoxanthine + NH4(+). This is Adenine deaminase 2 from Jannaschia sp. (strain CCS1).